Reading from the N-terminus, the 585-residue chain is Glutamate decarboxylase (585 aa).

Over residues 35–56 the composition is skewed to polar residues; the sequence is KSAVQSGHQGSNNMRDTSSQGM. The tract at residues 35–60 is disordered; the sequence is KSAVQSGHQGSNNMRDTSSQGMANKY. Lysine 318 is subject to N6-(pyridoxal phosphate)lysine.

This sequence belongs to the group II decarboxylase family. Pyridoxal 5'-phosphate serves as cofactor.

The catalysed reaction is L-glutamate + H(+) = 4-aminobutanoate + CO2. The protein is Glutamate decarboxylase (GAD1) of Saccharomyces cerevisiae (strain ATCC 204508 / S288c) (Baker's yeast).